Consider the following 378-residue polypeptide: Mannitol-1-phosphate 5-dehydrogenase (378 aa).

4 to 15 (SVHFGAGNIGRG) contacts NAD(+).

Belongs to the mannitol dehydrogenase family.

It catalyses the reaction D-mannitol 1-phosphate + NAD(+) = beta-D-fructose 6-phosphate + NADH + H(+). This is Mannitol-1-phosphate 5-dehydrogenase from Streptococcus pneumoniae (strain CGSP14).